The following is a 130-amino-acid chain: Glycoprotein hormone beta-5 (130 aa).

Residues 1–24 form the signal peptide; that stretch reads MKLAFLFLGPMALLLLAGYGCVLG. Intrachain disulfides connect Cys-36–Cys-84, Cys-50–Cys-99, Cys-60–Cys-115, Cys-64–Cys-117, and Cys-120–Cys-127. Asn-87 carries an N-linked (GlcNAc...) asparagine glycan.

Belongs to the glycoprotein hormones subunit beta family. Heterodimer with GPHA2; this heterodimer interacts with thyroid-stimulating hormone receptor (TSHR), and hence stimulates cAMP production. N-glycosylated. Highly expressed in brain and at low levels in pituitary. Also found in retina, testis and skin but not in pancreas, parotid, kidney, stomach, liver, colon, small intestine, thyroid, brain or adrenal gland. In pituitary, colocalizes with ACTH, suggesting that it is located in corticotrophs.

Its subcellular location is the secreted. In terms of biological role, functions as a heterodimeric glycoprotein hormone with GPHA2 able to bind and activate the thyroid-stimulating hormone receptor (TSHR), leading to increased cAMP production. Plays a central role in controlling thyroid cell metabolism. The sequence is that of Glycoprotein hormone beta-5 (GPHB5) from Homo sapiens (Human).